Consider the following 45-residue polypeptide: Large ribosomal subunit protein bL34 (45 aa).

A disordered region spans residues 1–45 (MTKRTFGGTSRKRKRVSGFRVRMRSHTGRRVIRTRRKRGRSRLAA). Basic residues predominate over residues 10-45 (SRKRKRVSGFRVRMRSHTGRRVIRTRRKRGRSRLAA).

This sequence belongs to the bacterial ribosomal protein bL34 family.

The chain is Large ribosomal subunit protein bL34 from Synechococcus sp. (strain CC9311).